A 449-amino-acid polypeptide reads, in one-letter code: UDP-N-acetylmuramate--L-alanine ligase (449 aa).

ATP is bound at residue 110–116 (GTHGKTT).

This sequence belongs to the MurCDEF family.

Its subcellular location is the cytoplasm. The catalysed reaction is UDP-N-acetyl-alpha-D-muramate + L-alanine + ATP = UDP-N-acetyl-alpha-D-muramoyl-L-alanine + ADP + phosphate + H(+). It participates in cell wall biogenesis; peptidoglycan biosynthesis. Cell wall formation. This is UDP-N-acetylmuramate--L-alanine ligase from Desulfitobacterium hafniense (strain Y51).